Here is a 513-residue protein sequence, read N- to C-terminus: V-type proton ATPase subunit B, kidney isoform (513 aa).

Position 394 (Arg394) interacts with ATP. A PDZ-binding motif is present at residues 510–513; it reads DTAL.

This sequence belongs to the ATPase alpha/beta chains family. V-ATPase is a heteromultimeric enzyme made up of two complexes: the ATP-hydrolytic V1 complex and the proton translocation V0 complex. The V1 complex consists of three catalytic AB heterodimers that form a heterohexamer, three peripheral stalks each consisting of EG heterodimers, one central rotor including subunits D and F, and the regulatory subunits C and H. The proton translocation complex V0 consists of the proton transport subunit a, a ring of proteolipid subunits c9c'', rotary subunit d, subunits e and f, and the accessory subunits ATP6AP1/Ac45 and ATP6AP2/PRR. Forms a complex with NHERF1 and SCL4A7. In terms of tissue distribution, kidney cortex and medulla.

It is found in the apical cell membrane. The protein resides in the basolateral cell membrane. Non-catalytic subunit of the V1 complex of vacuolar(H+)-ATPase (V-ATPase), a multisubunit enzyme composed of a peripheral complex (V1) that hydrolyzes ATP and a membrane integral complex (V0) that translocates protons. V-ATPase is responsible for acidifying and maintaining the pH of intracellular compartments and in some cell types, is targeted to the plasma membrane, where it is responsible for acidifying the extracellular environment. Essential for the proper assembly and activity of V-ATPase. In renal intercalated cells, mediates secretion of protons (H+) into the urine thereby ensuring correct urinary acidification. Required for optimal olfactory function by mediating the acidification of the nasal olfactory epithelium. In Bos taurus (Bovine), this protein is V-type proton ATPase subunit B, kidney isoform (ATP6V1B1).